The primary structure comprises 637 residues: DNA gyrase subunit B (637 aa).

A Toprim domain is found at 421-535 (SEIYIVEGDS…HGYVYIAQPP (115 aa)). Positions 427, 500, and 502 each coordinate Mg(2+).

This sequence belongs to the type II topoisomerase GyrB family. In terms of assembly, heterotetramer, composed of two GyrA and two GyrB chains. In the heterotetramer, GyrA contains the active site tyrosine that forms a transient covalent intermediate with DNA, while GyrB binds cofactors and catalyzes ATP hydrolysis. The cofactor is Mg(2+). Mn(2+) serves as cofactor. Requires Ca(2+) as cofactor.

The protein localises to the cytoplasm. It carries out the reaction ATP-dependent breakage, passage and rejoining of double-stranded DNA.. In terms of biological role, a type II topoisomerase that negatively supercoils closed circular double-stranded (ds) DNA in an ATP-dependent manner to modulate DNA topology and maintain chromosomes in an underwound state. Negative supercoiling favors strand separation, and DNA replication, transcription, recombination and repair, all of which involve strand separation. Also able to catalyze the interconversion of other topological isomers of dsDNA rings, including catenanes and knotted rings. Type II topoisomerases break and join 2 DNA strands simultaneously in an ATP-dependent manner. This chain is DNA gyrase subunit B, found in Halalkalibacterium halodurans (strain ATCC BAA-125 / DSM 18197 / FERM 7344 / JCM 9153 / C-125) (Bacillus halodurans).